The sequence spans 236 residues: Phosphoribosylaminoimidazole-succinocarboxamide synthase (236 aa).

Belongs to the SAICAR synthetase family.

It catalyses the reaction 5-amino-1-(5-phospho-D-ribosyl)imidazole-4-carboxylate + L-aspartate + ATP = (2S)-2-[5-amino-1-(5-phospho-beta-D-ribosyl)imidazole-4-carboxamido]succinate + ADP + phosphate + 2 H(+). Its pathway is purine metabolism; IMP biosynthesis via de novo pathway; 5-amino-1-(5-phospho-D-ribosyl)imidazole-4-carboxamide from 5-amino-1-(5-phospho-D-ribosyl)imidazole-4-carboxylate: step 1/2. The chain is Phosphoribosylaminoimidazole-succinocarboxamide synthase from Coprothermobacter proteolyticus (strain ATCC 35245 / DSM 5265 / OCM 4 / BT).